The primary structure comprises 233 residues: Enolase-phosphatase E1 (233 aa).

Residues D16 and E18 each contribute to the Mg(2+) site. Residues 131 to 132 (SS) and K167 each bind substrate. D193 provides a ligand contact to Mg(2+).

This sequence belongs to the HAD-like hydrolase superfamily. MasA/MtnC family. As to quaternary structure, monomer. The cofactor is Mg(2+).

It localises to the cytoplasm. It is found in the nucleus. It carries out the reaction 5-methylsulfanyl-2,3-dioxopentyl phosphate + H2O = 1,2-dihydroxy-5-(methylsulfanyl)pent-1-en-3-one + phosphate. The protein operates within amino-acid biosynthesis; L-methionine biosynthesis via salvage pathway; L-methionine from S-methyl-5-thio-alpha-D-ribose 1-phosphate: step 3/6. Its pathway is amino-acid biosynthesis; L-methionine biosynthesis via salvage pathway; L-methionine from S-methyl-5-thio-alpha-D-ribose 1-phosphate: step 4/6. Bifunctional enzyme that catalyzes the enolization of 2,3-diketo-5-methylthiopentyl-1-phosphate (DK-MTP-1-P) into the intermediate 2-hydroxy-3-keto-5-methylthiopentenyl-1-phosphate (HK-MTPenyl-1-P), which is then dephosphorylated to form the acireductone 1,2-dihydroxy-3-keto-5-methylthiopentene (DHK-MTPene). In Meyerozyma guilliermondii (strain ATCC 6260 / CBS 566 / DSM 6381 / JCM 1539 / NBRC 10279 / NRRL Y-324) (Yeast), this protein is Enolase-phosphatase E1.